Here is a 218-residue protein sequence, read N- to C-terminus: Small ribosomal subunit protein uS3c (218 aa).

One can recognise a KH type-2 domain in the interval 47 to 118 (VRKHIKSSSN…KLRMALTEVE (72 aa)).

It belongs to the universal ribosomal protein uS3 family. Part of the 30S ribosomal subunit.

It is found in the plastid. The protein localises to the chloroplast. The polypeptide is Small ribosomal subunit protein uS3c (rps3) (Anthoceros angustus (Hornwort)).